We begin with the raw amino-acid sequence, 198 residues long: dCTP deaminase (198 aa).

DCTP-binding positions include 99–104 (RSSLGR), 125–127 (TLE), and glutamine 144. Glutamate 127 acts as the Proton donor/acceptor in catalysis.

Belongs to the dCTP deaminase family. Homotrimer.

The enzyme catalyses dCTP + H2O + H(+) = dUTP + NH4(+). Its pathway is pyrimidine metabolism; dUMP biosynthesis; dUMP from dCTP (dUTP route): step 1/2. In terms of biological role, catalyzes the deamination of dCTP to dUTP. This chain is dCTP deaminase, found in Rhodopirellula baltica (strain DSM 10527 / NCIMB 13988 / SH1).